Reading from the N-terminus, the 334-residue chain is Glyceraldehyde-3-phosphate dehydrogenase 2 (334 aa).

NAD(+)-binding positions include 12–13, aspartate 35, and arginine 79; that span reads RI. D-glyceraldehyde 3-phosphate is bound by residues 152–154, threonine 183, arginine 198, 211–212, and arginine 234; these read SCT and SG. Cysteine 153 functions as the Nucleophile in the catalytic mechanism. An NAD(+)-binding site is contributed by asparagine 315.

This sequence belongs to the glyceraldehyde-3-phosphate dehydrogenase family. Homotetramer.

The protein localises to the cytoplasm. It catalyses the reaction D-glyceraldehyde 3-phosphate + phosphate + NAD(+) = (2R)-3-phospho-glyceroyl phosphate + NADH + H(+). Its pathway is carbohydrate degradation; glycolysis; pyruvate from D-glyceraldehyde 3-phosphate: step 1/5. Inhibited by pentalenolactone (PL). Its function is as follows. Catalyzes the oxidative phosphorylation of glyceraldehyde 3-phosphate (G3P) to 1,3-bisphosphoglycerate (BPG) using the cofactor NAD. The first reaction step involves the formation of a hemiacetal intermediate between G3P and a cysteine residue, and this hemiacetal intermediate is then oxidized to a thioester, with concomitant reduction of NAD to NADH. The reduced NADH is then exchanged with the second NAD, and the thioester is attacked by a nucleophilic inorganic phosphate to produce BPG. The chain is Glyceraldehyde-3-phosphate dehydrogenase 2 (gap2) from Streptomyces arenae.